Reading from the N-terminus, the 319-residue chain is tRNA U34 carboxymethyltransferase (319 aa).

Carboxy-S-adenosyl-L-methionine-binding positions include lysine 88, tryptophan 102, lysine 107, glycine 126, 176 to 177 (LE), methionine 192, tyrosine 196, and arginine 311.

Belongs to the class I-like SAM-binding methyltransferase superfamily. CmoB family. Homotetramer.

It carries out the reaction carboxy-S-adenosyl-L-methionine + 5-hydroxyuridine(34) in tRNA = 5-carboxymethoxyuridine(34) in tRNA + S-adenosyl-L-homocysteine + H(+). In terms of biological role, catalyzes carboxymethyl transfer from carboxy-S-adenosyl-L-methionine (Cx-SAM) to 5-hydroxyuridine (ho5U) to form 5-carboxymethoxyuridine (cmo5U) at position 34 in tRNAs. This Pseudomonas syringae pv. tomato (strain ATCC BAA-871 / DC3000) protein is tRNA U34 carboxymethyltransferase.